The sequence spans 188 residues: Large ribosomal subunit protein eL18 (188 aa).

A Glycyl lysine isopeptide (Lys-Gly) (interchain with G-Cter in SUMO2) cross-link involves residue Lys119. Phosphoserine is present on Ser130. The segment at 150 to 188 (RHFGKAPRTPHSHTKPYVRSKGRKFERARGRWASRGYKN) is disordered. Basic residues-rich tracts occupy residues 151-171 (HFGK…RSKG) and 179-188 (GRWASRGYKN). At Thr158 the chain carries Phosphothreonine. Lys164 is covalently cross-linked (Glycyl lysine isopeptide (Lys-Gly) (interchain with G-Cter in SUMO2)).

This sequence belongs to the eukaryotic ribosomal protein eL18 family. In terms of assembly, component of the large ribosomal subunit.

It is found in the cytoplasm. It localises to the cytosol. The protein localises to the rough endoplasmic reticulum. In terms of biological role, component of the large ribosomal subunit. The ribosome is a large ribonucleoprotein complex responsible for the synthesis of proteins in the cell. This chain is Large ribosomal subunit protein eL18 (RPL18), found in Oryctolagus cuniculus (Rabbit).